The chain runs to 101 residues: Small ribosomal subunit protein uS10 (101 aa).

The protein belongs to the universal ribosomal protein uS10 family. As to quaternary structure, part of the 30S ribosomal subunit.

Its function is as follows. Involved in the binding of tRNA to the ribosomes. The chain is Small ribosomal subunit protein uS10 from Mycobacterium ulcerans (strain Agy99).